The sequence spans 788 residues: Leucine-rich repeat and fibronectin type-III domain-containing protein 2 (788 aa).

A signal peptide spans 1–20 (METLLGGLLAFGMAFAVVDA). Residues 21-52 (CPKYCVCQNLSESLGTLCPSKGLLFVPPDIDR) enclose the LRRNT domain. At 21–534 (CPKYCVCQNL…MHSQILGGTM (514 aa)) the chain is on the extracellular side. Residue asparagine 29 is glycosylated (N-linked (GlcNAc...) asparagine). 7 LRR repeats span residues 53 to 74 (RTVELRLGGNFIIHIGRQDFAN), 77 to 98 (GLVDLTLSRNTISHIQPFSFLD), 101 to 122 (SLRSLHLDSNRLPSLGEDTLRG), 125 to 146 (NLQHLIVNNNQLGGIADDAFED), 150 to 171 (TLEDLDLSYNNLHGLPWDSVRR), 174 to 195 (NLHQLSLDHNLLDHIAEGTFAD), and 198 to 219 (KLARLDLTSNRLQKLPPDPIFA). Positions 242 to 288 (NPLHCNCELLWLRRLERDDDLETCGSPGSLKGRYFWHIREEEFVCEP) constitute an LRRCT domain. The region spanning 289–375 (PLITQHTHKL…GEATATVEVS (87 aa)) is the Ig-like domain. A disulfide bridge links cysteine 310 with cysteine 359. Asparagine 332, asparagine 341, and asparagine 384 each carry an N-linked (GlcNAc...) asparagine glycan. The segment at 383 to 423 (SNSTSRMAPPKSRLSDITGSSKTSRGGGGSGAGEPPKSTPE) is disordered. The 97-residue stretch at 422–518 (PERAVLVSDV…GCAQFFTKAD (97 aa)) folds into the Fibronectin type-III domain. A helical transmembrane segment spans residues 535–555 (ILVIGGIIVATLLVFIVILMV). Topologically, residues 556–788 (RYKVCNHDTP…SSEWVMESTV (233 aa)) are cytoplasmic. Residues 620-631 (CDSSSSSSLGSG) show a composition bias toward low complexity. Disordered stretches follow at residues 620 to 655 (CDSSSSSSLGSGEAAGLGRGPWRLPPPAPRPKPSLD) and 668 to 711 (SQRK…RSLL). Residues 642-651 (RLPPPAPRPK) show a composition bias toward pro residues. The short motif at 785–788 (ESTV) is the PDZ-binding element.

Belongs to the LRFN family. Forms heteromeric complexes with LRFN1, LRFN3, LRFN4 and LRFN5. Can form homomeric complexes, but not across cell junctions. Interacts with DLG4. Directly interacts with DLG1, DLG2 and DLG3. Directly interacts with 2 NMDA receptor subunits GRIN1 and GRIN2A. In terms of processing, glycosylated. Predominantly expressed in the brain, with a weak, but broad expression in the cerebral cortex and diencephalic nuclei. Strongly expressed in both the pyramidal layer and the dentate gyrus of the hippocampus. Also detected in other parts of the central nervous system, including the olfactory bulb, pons, cerebellum, and medulla oblongata, as well as in the peripheral nervous system, such as the ganglia of cranial nerves and the dorsal root ganglion during gestation.

It localises to the membrane. The protein resides in the synapse. Its subcellular location is the postsynaptic cell membrane. Promotes neurite outgrowth in hippocampal neurons. Enhances the cell surface expression of 2 NMDA receptor subunits GRIN1 and GRIN2A. May play a role in redistributing DLG4 to the cell periphery. In Mus musculus (Mouse), this protein is Leucine-rich repeat and fibronectin type-III domain-containing protein 2 (Lrfn2).